The primary structure comprises 551 residues: Membrane protein insertase YidC (551 aa).

Residues 3-23 form a helical membrane-spanning segment; sequence ANHIRILLLVTIAIMFISLMG. The segment covering 33-47 has biased composition (polar residues); the sequence is NTKQQTSATQNNSHY. The tract at residues 33–58 is disordered; sequence NTKQQTSATQNNSHYDNADSSTNTDV. 3 helical membrane-spanning segments follow: residues 361-381, 431-451, and 504-524; these read LVGN…LIFY, LSGC…YWVL, and VMMF…SGLV.

This sequence belongs to the OXA1/ALB3/YidC family. Type 1 subfamily. Interacts with the Sec translocase complex via SecD. Specifically interacts with transmembrane segments of nascent integral membrane proteins during membrane integration.

The protein localises to the cell inner membrane. Required for the insertion and/or proper folding and/or complex formation of integral membrane proteins into the membrane. Involved in integration of membrane proteins that insert both dependently and independently of the Sec translocase complex, as well as at least some lipoproteins. Aids folding of multispanning membrane proteins. The sequence is that of Membrane protein insertase YidC from Francisella tularensis subsp. novicida (strain U112).